The sequence spans 261 residues: 3-methyl-2-oxobutanoate hydroxymethyltransferase (261 aa).

Positions 44 and 83 each coordinate Mg(2+). 3-methyl-2-oxobutanoate contacts are provided by residues 44–45, D83, and K113; that span reads DS. Position 115 (E115) interacts with Mg(2+). The active-site Proton acceptor is E183.

It belongs to the PanB family. As to quaternary structure, homodecamer; pentamer of dimers. Mg(2+) serves as cofactor.

Its subcellular location is the cytoplasm. It catalyses the reaction 3-methyl-2-oxobutanoate + (6R)-5,10-methylene-5,6,7,8-tetrahydrofolate + H2O = 2-dehydropantoate + (6S)-5,6,7,8-tetrahydrofolate. The protein operates within cofactor biosynthesis; (R)-pantothenate biosynthesis; (R)-pantoate from 3-methyl-2-oxobutanoate: step 1/2. In terms of biological role, catalyzes the reversible reaction in which hydroxymethyl group from 5,10-methylenetetrahydrofolate is transferred onto alpha-ketoisovalerate to form ketopantoate. This chain is 3-methyl-2-oxobutanoate hydroxymethyltransferase, found in Cyanothece sp. (strain PCC 7425 / ATCC 29141).